The sequence spans 479 residues: Aryl-phospho-beta-D-glucosidase BglA (479 aa).

Glutamate 176 acts as the Proton donor in catalysis. Residue glutamate 377 is the Nucleophile of the active site.

This sequence belongs to the glycosyl hydrolase 1 family.

It catalyses the reaction 6-phospho-beta-D-glucosyl-(1-&gt;4)-D-glucose + H2O = D-glucose 6-phosphate + D-glucose. Catalyzes the hydrolysis of aryl-phospho-beta-D-glucosides such as 4-methylumbelliferyl-phospho-beta-D-glucopyranoside (MUG-P), phosphoarbutin and phosphosalicin. Plays a major role in the utilization of arbutin or salicin as the sole carbon source. BglA and BglH are the major proteins contributing to hydrolysis of MUG-P by extracts of late-exponential-phase or stationary-phase B.subtilis cells. This chain is Aryl-phospho-beta-D-glucosidase BglA (bglA), found in Bacillus subtilis (strain 168).